The following is a 277-amino-acid chain: Knob-associated histidine-rich protein (277 aa).

Disordered regions lie at residues 95 to 114 (DGSH…GYGY) and 162 to 277 (SSVN…KKKK). 2 stretches are compositionally biased toward basic and acidic residues: residues 169–190 (KHGD…EGEK) and 211–220 (KDNEDAESVK). Positions 221–237 (SKKHKSHDCEKKKSKKH) are enriched in basic residues. Basic and acidic residues-rich tracts occupy residues 238-259 (KDNE…GEKH) and 268-277 (KTNEEKKKKK).

The protein localises to the secreted. Functionally, KAHRP might mimick human histidine-rich glycoproteins to anchor host thrombospondin or a parasite analog in a binding complex with the endothelial cell receptor. The sequence is that of Knob-associated histidine-rich protein from Plasmodium falciparum (isolate CDC / Honduras).